The chain runs to 381 residues: Lysophosphatidylserine lipase ABHD12 (381 aa).

At 1 to 58 the chain is on the cytoplasmic side; it reads MRKRNESVTVEHERAAAAPAPLDKGCSLRHSLRLPAADTGMKRPLGRRHGLWFRLRRL. Residues 59–79 traverse the membrane as a helical segment; it reads IIWLLGVYIAIPFLVKLCPAI. The Extracellular segment spans residues 80–381; the sequence is QAKLVFLNFV…LGIPEHEHHH (302 aa). N-linked (GlcNAc...) asparagine glycosylation occurs at Asn-106. The active-site Nucleophile is Ser-229. Catalysis depends on charge relay system residues Asp-316 and His-355.

It belongs to the serine esterase family.

It is found in the endoplasmic reticulum membrane. It carries out the reaction 1-(9Z-octadecenoyl)-sn-glycero-3-phospho-L-serine + H2O = sn-glycero-3-phospho-L-serine + (9Z)-octadecenoate + H(+). It catalyses the reaction 1-(9Z-octadecenoyl)-sn-glycero-3-phospho-(1'-sn-glycerol) + H2O = sn-glycero-3-phospho-(1'-sn-glycerol) + (9Z)-octadecenoate + H(+). The enzyme catalyses 1-(9Z-octadecenoyl)-sn-glycero-3-phospho-(1D-myo-inositol) + H2O = sn-glycero-3-phospho-1D-myo-inositol + (9Z)-octadecenoate + H(+). The catalysed reaction is 1-(9Z-octadecenoyl)-sn-glycero-3-phosphoethanolamine + H2O = sn-glycero-3-phosphoethanolamine + (9Z)-octadecenoate + H(+). It carries out the reaction 1-(9Z-octadecenoyl)-sn-glycero-3-phosphocholine + H2O = 1-(9Z-octadecenoyl)-sn-glycerol + phosphocholine + H(+). It catalyses the reaction 2-(9Z-octadecenoyl)-glycerol + H2O = glycerol + (9Z)-octadecenoate + H(+). The enzyme catalyses 1-hexadecanoyl-sn-glycero-3-phospho-L-serine + H2O = sn-glycero-3-phospho-L-serine + hexadecanoate + H(+). The catalysed reaction is 2-(5Z,8Z,11Z,14Z-eicosatetraenoyl)-glycerol + H2O = glycerol + (5Z,8Z,11Z,14Z)-eicosatetraenoate + H(+). It carries out the reaction Hydrolyzes glycerol monoesters of long-chain fatty acids.. It catalyses the reaction 1-decanoylglycerol + H2O = decanoate + glycerol + H(+). The enzyme catalyses 1-dodecanoylglycerol + H2O = dodecanoate + glycerol + H(+). The catalysed reaction is 1-tetradecanoylglycerol + H2O = tetradecanoate + glycerol + H(+). It carries out the reaction 2-hexadecanoylglycerol + H2O = glycerol + hexadecanoate + H(+). It catalyses the reaction 1-(9Z-octadecenoyl)-glycerol + H2O = glycerol + (9Z)-octadecenoate + H(+). The enzyme catalyses 2-(9Z,12Z-octadecadienoyl)-glycerol + H2O = (9Z,12Z)-octadecadienoate + glycerol + H(+). The catalysed reaction is 1-(5Z,8Z,11Z,14Z-eicosatetraenoyl)-glycerol + H2O = glycerol + (5Z,8Z,11Z,14Z)-eicosatetraenoate + H(+). It carries out the reaction 1-(9Z,12Z-octadecadienoyl)-glycerol + H2O = (9Z,12Z)-octadecadienoate + glycerol + H(+). It catalyses the reaction 1-hexadecanoylglycerol + H2O = glycerol + hexadecanoate + H(+). The enzyme catalyses 1-octadecanoylglycerol + H2O = octadecanoate + glycerol + H(+). The catalysed reaction is 1-octadecanoyl-2-(9,10-epoxyoctadecanoyl)-sn-glycero-3-phospho-L-serine + H2O = 9,10-epoxyoctadecanoate + 1-octadecanoyl-sn-glycero-3-phosphoserine + H(+). It carries out the reaction 1-octadecanoyl-2-(10-hydroxyoctadecanoyl)-sn-glycero-3-phospho-L-serine + H2O = 1-octadecanoyl-sn-glycero-3-phosphoserine + 10-hydroxyoctadecanoate + H(+). It catalyses the reaction 1-hexadecanoyl-2-(10-hydroxyoctadecanoyl)-sn-glycero-3-phospho-L-serine + H2O = 10-hydroxyoctadecanoate + 1-hexadecanoyl-sn-glycero-3-phospho-L-serine + H(+). In terms of biological role, lysophosphatidylserine (LPS) lipase that mediates the hydrolysis of lysophosphatidylserine, a class of signaling lipids that regulates immunological and neurological processes. Represents a major lysophosphatidylserine lipase in the brain, thereby playing a key role in the central nervous system. Also able to hydrolyze oxidized phosphatidylserine; oxidized phosphatidylserine is produced in response to severe inflammatory stress and constitutes a proapoptotic 'eat me' signal. Also has monoacylglycerol (MAG) lipase activity: hydrolyzes 2-arachidonoylglycerol (2-AG), thereby acting as a regulator of endocannabinoid signaling pathways. Has a strong preference for very-long-chain lipid substrates; substrate specificity is likely due to improved catalysis and not improved substrate binding. The polypeptide is Lysophosphatidylserine lipase ABHD12 (Gallus gallus (Chicken)).